A 268-amino-acid polypeptide reads, in one-letter code: MHLQRLKEELERDIARIAEFKPVVHHITNYVAMNDSANITIAIGASPIMSFAHGEIDELVSIASSLLINIGTLDEYIIQAVMLAVKSAKSKGVPVLLDPVGSGATKLRTSTALSVAEEGVDVIKGNQGEILSLLRKEGVVRGVDSKVTAEAADVKEVARKFGLVVVATGKEDLISDGRSVYVMRNGTEMLGRITASGCMLGSVIASFMAVQKDFLLASLEGLACYNVAGELAAEKSSGTASFRSNLIDEISKITAEKVIERLNLERVV.

Met49 contributes to the substrate binding site. 2 residues coordinate ATP: Lys124 and Thr168. Substrate is bound at residue Ala195.

This sequence belongs to the Thz kinase family. It depends on Mg(2+) as a cofactor.

It carries out the reaction 5-(2-hydroxyethyl)-4-methylthiazole + ATP = 4-methyl-5-(2-phosphooxyethyl)-thiazole + ADP + H(+). It participates in cofactor biosynthesis; thiamine diphosphate biosynthesis; 4-methyl-5-(2-phosphoethyl)-thiazole from 5-(2-hydroxyethyl)-4-methylthiazole: step 1/1. Its function is as follows. Catalyzes the phosphorylation of the hydroxyl group of 4-methyl-5-beta-hydroxyethylthiazole (THZ). In Archaeoglobus fulgidus (strain ATCC 49558 / DSM 4304 / JCM 9628 / NBRC 100126 / VC-16), this protein is Hydroxyethylthiazole kinase.